The sequence spans 221 residues: Octanoyltransferase (221 aa).

The BPL/LPL catalytic domain maps to 35–221 (ESYENRIIFC…RELLAALLSK (187 aa)). Substrate-binding positions include 80–87 (RGGDITYH), 152–154 (AIG), and 165–167 (GLA). The Acyl-thioester intermediate role is filled by Cys-183.

The protein belongs to the LipB family.

It localises to the cytoplasm. The catalysed reaction is octanoyl-[ACP] + L-lysyl-[protein] = N(6)-octanoyl-L-lysyl-[protein] + holo-[ACP] + H(+). The protein operates within protein modification; protein lipoylation via endogenous pathway; protein N(6)-(lipoyl)lysine from octanoyl-[acyl-carrier-protein]: step 1/2. Its function is as follows. Catalyzes the transfer of endogenously produced octanoic acid from octanoyl-acyl-carrier-protein onto the lipoyl domains of lipoate-dependent enzymes. Lipoyl-ACP can also act as a substrate although octanoyl-ACP is likely to be the physiological substrate. The chain is Octanoyltransferase from Bacteroides fragilis (strain ATCC 25285 / DSM 2151 / CCUG 4856 / JCM 11019 / LMG 10263 / NCTC 9343 / Onslow / VPI 2553 / EN-2).